Consider the following 460-residue polypeptide: Argininosuccinate lyase (460 aa).

It belongs to the lyase 1 family. Argininosuccinate lyase subfamily.

The protein localises to the cytoplasm. It carries out the reaction 2-(N(omega)-L-arginino)succinate = fumarate + L-arginine. It participates in amino-acid biosynthesis; L-arginine biosynthesis; L-arginine from L-ornithine and carbamoyl phosphate: step 3/3. The sequence is that of Argininosuccinate lyase from Edwardsiella ictaluri (strain 93-146).